The following is a 377-amino-acid chain: Actin-related protein T2 (377 aa).

Belongs to the actin family.

Its subcellular location is the cytoplasm. The protein localises to the cytoskeleton. This is Actin-related protein T2 (ACTRT2) from Homo sapiens (Human).